The sequence spans 406 residues: Enoyl-[acyl-carrier-protein] reductase [NADH] (406 aa).

Residues 48–53 (GASTGF), 74–75 (FE), 111–112 (DA), and 140–141 (IA) contribute to the NAD(+) site. Tyr-226 lines the substrate pocket. Tyr-236 (proton donor) is an active-site residue. Residues Lys-245 and 275 to 277 (LVT) each bind NAD(+).

Belongs to the TER reductase family. In terms of assembly, monomer.

It catalyses the reaction a 2,3-saturated acyl-[ACP] + NAD(+) = a (2E)-enoyl-[ACP] + NADH + H(+). The protein operates within lipid metabolism; fatty acid biosynthesis. Functionally, involved in the final reduction of the elongation cycle of fatty acid synthesis (FAS II). Catalyzes the reduction of a carbon-carbon double bond in an enoyl moiety that is covalently linked to an acyl carrier protein (ACP). This chain is Enoyl-[acyl-carrier-protein] reductase [NADH], found in Coxiella burnetii (strain CbuK_Q154) (Coxiella burnetii (strain Q154)).